A 467-amino-acid polypeptide reads, in one-letter code: Argininosuccinate lyase (467 aa).

This sequence belongs to the lyase 1 family. Argininosuccinate lyase subfamily.

It is found in the cytoplasm. It carries out the reaction 2-(N(omega)-L-arginino)succinate = fumarate + L-arginine. It participates in amino-acid biosynthesis; L-arginine biosynthesis; L-arginine from L-ornithine and carbamoyl phosphate: step 3/3. The protein is Argininosuccinate lyase of Anaeromyxobacter dehalogenans (strain 2CP-C).